Consider the following 525-residue polypeptide: GMP synthase [glutamine-hydrolyzing] (525 aa).

Residues 8–207 enclose the Glutamine amidotransferase type-1 domain; the sequence is KILILDFGSQ…ALDICGCAAN (200 aa). Catalysis depends on C85, which acts as the Nucleophile. Residues H181 and E183 contribute to the active site. Residues 208 to 400 enclose the GMPS ATP-PPase domain; that stretch reads WKPSSIIEDA…LGLPYNMLYR (193 aa). 235-241 contributes to the ATP binding site; it reads SGGVDSS.

In terms of assembly, homodimer.

It catalyses the reaction XMP + L-glutamine + ATP + H2O = GMP + L-glutamate + AMP + diphosphate + 2 H(+). The protein operates within purine metabolism; GMP biosynthesis; GMP from XMP (L-Gln route): step 1/1. Catalyzes the synthesis of GMP from XMP. This chain is GMP synthase [glutamine-hydrolyzing], found in Shewanella putrefaciens (strain CN-32 / ATCC BAA-453).